A 271-amino-acid polypeptide reads, in one-letter code: Formamidopyrimidine-DNA glycosylase (271 aa).

P2 acts as the Schiff-base intermediate with DNA in catalysis. Residue E3 is the Proton donor of the active site. K58 acts as the Proton donor; for beta-elimination activity in catalysis. Residues H92, R111, and R152 each coordinate DNA. The segment at 237–271 (MVYGREGQACKHCGRELKHATIGQRATVWCAACQR) adopts an FPG-type zinc-finger fold. Residue R261 is the Proton donor; for delta-elimination activity of the active site.

It belongs to the FPG family. In terms of assembly, monomer. Zn(2+) is required as a cofactor.

The catalysed reaction is Hydrolysis of DNA containing ring-opened 7-methylguanine residues, releasing 2,6-diamino-4-hydroxy-5-(N-methyl)formamidopyrimidine.. It catalyses the reaction 2'-deoxyribonucleotide-(2'-deoxyribose 5'-phosphate)-2'-deoxyribonucleotide-DNA = a 3'-end 2'-deoxyribonucleotide-(2,3-dehydro-2,3-deoxyribose 5'-phosphate)-DNA + a 5'-end 5'-phospho-2'-deoxyribonucleoside-DNA + H(+). Its function is as follows. Involved in base excision repair of DNA damaged by oxidation or by mutagenic agents. Acts as a DNA glycosylase that recognizes and removes damaged bases. Has a preference for oxidized purines, such as 7,8-dihydro-8-oxoguanine (8-oxoG). Has AP (apurinic/apyrimidinic) lyase activity and introduces nicks in the DNA strand. Cleaves the DNA backbone by beta-delta elimination to generate a single-strand break at the site of the removed base with both 3'- and 5'-phosphates. The sequence is that of Formamidopyrimidine-DNA glycosylase from Xanthomonas campestris pv. campestris (strain B100).